The following is a 195-amino-acid chain: Obelin (195 aa).

Residues 1–6 (MSSKYA) constitute a propeptide that is removed on maturation. EF-hand domains are found at residues 17–52 (RWIKRHKHMFDFLDINGNGKITLDEIVSKASDDICA), 53–88 (KLEATPEQTKRHQVCVEAFFRGCGMEYGKEIAFPQF), 110–145 (LIREWGDAVFDIFDKDGSGTITLDEWKAYGKISGIS), and 146–181 (PSQEDCEATFRHCDLDNSGDLDVDEMTRQHLGFWYT). 5 residues coordinate Ca(2+): aspartate 30, asparagine 32, asparagine 34, lysine 36, and glutamate 41. Ca(2+) contacts are provided by aspartate 123, aspartate 125, serine 127, threonine 129, glutamate 134, aspartate 159, aspartate 161, serine 163, aspartate 165, and glutamate 170.

It belongs to the aequorin family.

Its function is as follows. Ca(2+)-dependent bioluminescence photoprotein. Displays an emission peak at 470 nm (blue light). Trace amounts of calcium ion trigger the intramolecular oxidation of the chromophore, coelenterazine into coelenteramide and CO(2) with the concomitant emission of light. The sequence is that of Obelin from Obelia longissima (Black sea hydrozoan).